Reading from the N-terminus, the 65-residue chain is Large ribosomal subunit protein bL35 (65 aa).

Basic residues-rich tracts occupy residues 1 to 15 and 26 to 44; these read MPKMKTKKSASKRFT and QAFKRHILTKKTTKNKRQL. Residues 1–65 are disordered; the sequence is MPKMKTKKSA…KSVRAMMPYA (65 aa).

It belongs to the bacterial ribosomal protein bL35 family.

This Cupriavidus metallidurans (strain ATCC 43123 / DSM 2839 / NBRC 102507 / CH34) (Ralstonia metallidurans) protein is Large ribosomal subunit protein bL35.